The primary structure comprises 34 residues: Photosystem II reaction center protein Psb30 (34 aa).

The helical transmembrane segment at 9–29 threads the bilayer; it reads QLIATGTIMLAGPAVIVLLAL.

It belongs to the Psb30/Ycf12 family. As to quaternary structure, PSII is composed of 1 copy each of membrane proteins PsbA, PsbB, PsbC, PsbD, PsbE, PsbF, PsbH, PsbI, PsbJ, PsbK, PsbL, PsbM, PsbT, PsbX, PsbY, PsbZ, Psb30/Ycf12, peripheral proteins of the oxygen-evolving complex and a large number of cofactors. It forms dimeric complexes.

The protein localises to the plastid. It localises to the chloroplast thylakoid membrane. In terms of biological role, a core subunit of photosystem II (PSII), probably helps stabilize the reaction center. In Phaeodactylum tricornutum (strain CCAP 1055/1), this protein is Photosystem II reaction center protein Psb30.